A 144-amino-acid chain; its full sequence is uncharacterized protein (144 aa).

Belongs to the mimivirus L885/R898 family.

This is an uncharacterized protein from Acanthamoeba polyphaga (Amoeba).